A 393-amino-acid chain; its full sequence is Sister chromatid cohesion protein DCC1 (393 aa).

Belongs to the DCC1 family. As to quaternary structure, component of the CTF18-RFC complex which consists of CTF8, CTF18, DSCC1 and the RFC complex. Interacts with CTF8 and CTF18. Interacts with DDX11.

The protein localises to the nucleus. Its function is as follows. Loads PCNA onto primed templates regulating velocity, spacing and restart activity of replication forks. May couple DNA replication to sister chromatid cohesion through regulation of the acetylation of the cohesin subunit SMC3. The chain is Sister chromatid cohesion protein DCC1 (DSCC1) from Homo sapiens (Human).